Here is a 294-residue protein sequence, read N- to C-terminus: ATP synthase gamma chain (294 aa).

The protein belongs to the ATPase gamma chain family. F-type ATPases have 2 components, CF(1) - the catalytic core - and CF(0) - the membrane proton channel. CF(1) has five subunits: alpha(3), beta(3), gamma(1), delta(1), epsilon(1). CF(0) has three main subunits: a, b and c.

Its subcellular location is the cell membrane. In terms of biological role, produces ATP from ADP in the presence of a proton gradient across the membrane. The gamma chain is believed to be important in regulating ATPase activity and the flow of protons through the CF(0) complex. This chain is ATP synthase gamma chain, found in Ruminiclostridium cellulolyticum (strain ATCC 35319 / DSM 5812 / JCM 6584 / H10) (Clostridium cellulolyticum).